A 285-amino-acid chain; its full sequence is Diaminopimelate epimerase (285 aa).

Asn15 and Asn68 together coordinate substrate. Catalysis depends on Cys77, which acts as the Proton donor. Residues 78–79 (GN), Asn165, Asn201, and 219–220 (ER) contribute to the substrate site. Residue Cys228 is the Proton acceptor of the active site. Position 229–230 (229–230 (GT)) interacts with substrate.

It belongs to the diaminopimelate epimerase family. In terms of assembly, homodimer.

The protein localises to the cytoplasm. The catalysed reaction is (2S,6S)-2,6-diaminopimelate = meso-2,6-diaminopimelate. It functions in the pathway amino-acid biosynthesis; L-lysine biosynthesis via DAP pathway; DL-2,6-diaminopimelate from LL-2,6-diaminopimelate: step 1/1. In terms of biological role, catalyzes the stereoinversion of LL-2,6-diaminopimelate (L,L-DAP) to meso-diaminopimelate (meso-DAP), a precursor of L-lysine and an essential component of the bacterial peptidoglycan. This chain is Diaminopimelate epimerase, found in Synechococcus sp. (strain JA-3-3Ab) (Cyanobacteria bacterium Yellowstone A-Prime).